A 416-amino-acid chain; its full sequence is MAGIISSMTVPDLLKAGWRERIALLAETLQTWPWLDTLKTLRQRFREDRLGLTASSLTFTTTIALVPLATVTLAIFSAFPMFGQFQGALEKYFIQSLVPDGIAKPVLGALTQFAGKAHRLGTVGLVVLVLTALALMLTIDRTLNAIWRVRKPRPIAQRVLVYWAAATLGPLLLGVSLTLTSYAISASRGVVGAMPGSLSVLLNALEFGLLAAAMAGLFHYVPNTEVRWRHALAGGLFVSAGFELAKKGLAWYLAQVPTYSTIYGAFATVPIFLIWLYLGWVIVLLGAVIAAYAPSLSMHIVRQPNTPGYRFQAAVQLLRELAAARARGERGLGLVGLASTLRTDPLQIEPSLERLVELDWVGRLDEAGEKRYVLLCDPNTTPAQPLLAALLLDPSPGLRGFWQRARFGEMTLQELI.

6 helical membrane passes run 63–83, 120–140, 159–179, 198–218, 234–256, and 271–291; these read IALV…PMFG, LGTV…LTID, VLVY…SLTL, LSVL…AGLF, GGLF…LAQV, and IFLI…VIAA.

The protein belongs to the UPF0761 family.

The protein resides in the cell inner membrane. This is UPF0761 membrane protein Mpe_A1422 from Methylibium petroleiphilum (strain ATCC BAA-1232 / LMG 22953 / PM1).